The primary structure comprises 514 residues: Membrane-bound lytic murein transglycosylase F (514 aa).

The first 30 residues, 1–30 (MKKLKINYLFIGILTLLLAAALWPSIPWFG), serve as a signal peptide directing secretion. Residues 31–269 (KTENHIAAIQ…RIEEKYLGHG (239 aa)) form a non-LT domain region. The tract at residues 270 to 514 (DDFDYVDTRS…LFTPQKKEEK (245 aa)) is LT domain. Glutamate 314 is a catalytic residue.

This sequence in the N-terminal section; belongs to the bacterial solute-binding protein 3 family. It in the C-terminal section; belongs to the transglycosylase Slt family.

It localises to the cell outer membrane. It carries out the reaction Exolytic cleavage of the (1-&gt;4)-beta-glycosidic linkage between N-acetylmuramic acid (MurNAc) and N-acetylglucosamine (GlcNAc) residues in peptidoglycan, from either the reducing or the non-reducing ends of the peptidoglycan chains, with concomitant formation of a 1,6-anhydrobond in the MurNAc residue.. Murein-degrading enzyme that degrades murein glycan strands and insoluble, high-molecular weight murein sacculi, with the concomitant formation of a 1,6-anhydromuramoyl product. Lytic transglycosylases (LTs) play an integral role in the metabolism of the peptidoglycan (PG) sacculus. Their lytic action creates space within the PG sacculus to allow for its expansion as well as for the insertion of various structures such as secretion systems and flagella. The polypeptide is Membrane-bound lytic murein transglycosylase F (Salmonella typhimurium (strain LT2 / SGSC1412 / ATCC 700720)).